The following is a 251-amino-acid chain: Protein unc-119 homolog B (251 aa).

Positions 1 to 28 (MSGSNPKAAAAASAAGPGGLVAGKEEKK) are disordered. The residue at position 2 (Ser2) is an N-acetylserine. At Lys24 the chain carries N6-acetyllysine. Tyr142 provides a ligand contact to tetradecanoate.

Belongs to the PDE6D/unc-119 family. As to quaternary structure, found in a complex with ARL3, RP2 and UNC119B; RP2 induces hydrolysis of GTP ARL3 in the complex, leading to the release of UNC119B. Interacts with NPHP3 (when myristoylated). Interacts with CYS1 (when myristoylated). Interacts with MACIR; interaction only takes place when UNC119B is not liganded with myristoylated proteins.

The protein localises to the cell projection. It is found in the cilium. Myristoyl-binding protein that acts as a cargo adapter: specifically binds the myristoyl moiety of a subset of N-terminally myristoylated proteins and is required for their localization. Binds myristoylated NPHP3 and plays a key role in localization of NPHP3 to the primary cilium membrane. Does not bind all myristoylated proteins. Probably plays a role in trafficking proteins in photoreceptor cells. The sequence is that of Protein unc-119 homolog B (UNC119B) from Homo sapiens (Human).